The primary structure comprises 102 residues: MAGQKIRIRLKSYDHEVIDQSAKKIVETVTNAGATVVGPVPLPTEKNVYCVIRSPHKYKDSREHFEMRTHKRLIDIVDPTPKAVDSLMHIDLPADVNIEIKL.

This sequence belongs to the universal ribosomal protein uS10 family. In terms of assembly, part of the 30S ribosomal subunit.

In terms of biological role, involved in the binding of tRNA to the ribosomes. This chain is Small ribosomal subunit protein uS10, found in Bifidobacterium animalis subsp. lactis (strain AD011).